Here is a 505-residue protein sequence, read N- to C-terminus: MAILKSALVGFICFLHFFIVNASDNKSLLTEDIMASQVCNGMFAKKGKTSEITLKIDSYTSDFGGAIRLLIFNWKDVNAIGMEDDDGEKHYICNYEDIEAGVCKDDDYGLYLINQTAPHDSIYSAAVDAESMVSPLKYPVEQSGLYCVFTAPLEGSSEAYKITVTWENYFGNLDATDYPHLFLNPILLAINCLIGIWWSFIMFRYRHDLLQVQKYISGVVALSIVCTMVSTGYFYFANSKGYTTGSKVFAFFLSLAQSARQSYFGFLLLIVSLGYSIVVPSLGSLLRKCQILAGLQFVSSCFFLSSLFISPSNKESLVILFAAPVFLITLFAMFLWIVLALNNTIRDLRIRKQTVKAQMYTRLWIVICFGIVAYASIVAANAILIGIYGQMNYYLKYWKLLWFLNYGYTDILVLILMLTILYLWRPTENNRRFAMSEQVAQDVDEFEMTSSLSNDSLHLHHERPTSPANPHIIHGSADEHQALFAVDDESDDDASTLATSKQKPA.

An N-terminal signal peptide occupies residues 1 to 22 (MAILKSALVGFICFLHFFIVNA). N-linked (GlcNAc...) asparagine glycosylation is found at N25 and N114. Transmembrane regions (helical) follow at residues 181–201 (LFLN…WSFI), 216–236 (ISGV…YFYF), 266–286 (FLLL…GSLL), 291–311 (ILAG…FISP), and 318–338 (VILF…LWIV). An N-linked (GlcNAc...) asparagine glycan is attached at N342. The next 2 helical transmembrane spans lie at 365–385 (IVIC…AILI) and 400–420 (LLWF…MLTI). N454 carries N-linked (GlcNAc...) asparagine glycosylation.

It belongs to the LU7TM family.

The protein resides in the membrane. This is an uncharacterized protein from Schizosaccharomyces pombe (strain 972 / ATCC 24843) (Fission yeast).